The following is a 239-amino-acid chain: Uridylate kinase (239 aa).

An ATP-binding site is contributed by 10–13 (KFSG). The involved in allosteric activation by GTP stretch occupies residues 18–23 (GENGFG). Gly52 serves as a coordination point for UMP. ATP contacts are provided by Gly53 and Arg57. UMP is bound by residues Asp73 and 134–141 (TGNPYFTT). ATP is bound by residues Thr161, Tyr167, and Asp170.

Belongs to the UMP kinase family. As to quaternary structure, homohexamer.

The protein localises to the cytoplasm. It carries out the reaction UMP + ATP = UDP + ADP. The protein operates within pyrimidine metabolism; CTP biosynthesis via de novo pathway; UDP from UMP (UMPK route): step 1/1. Its activity is regulated as follows. Allosterically activated by GTP. Inhibited by UTP. In terms of biological role, catalyzes the reversible phosphorylation of UMP to UDP. This is Uridylate kinase from Campylobacter jejuni subsp. jejuni serotype O:6 (strain 81116 / NCTC 11828).